We begin with the raw amino-acid sequence, 953 residues long: MGLKDYYTWKFPNIPEHVAQELDQLGRSLVVVGVIGRSRCVLANKMRAFGMEPPVDHEPTDGQLQCYYKPGTSTLLLHFETTFDDAILGQQIDETMEQDGAPFDFDGFYERMKCRFVRMMLLALHVCHILVYVETGQTFDLSLVTIFQLMKFGREHHLIQFLPSLLKETPAGRLLGEKCRLCTPRILFLFENFTQEEGKTRECVSACEFQTEDSIYELLRHHQIITNSSSSSLLALPNNKQFVFYNAHDQLHADRLLQSIEFLNLDMRKVDVKEEDDDLEVLELAPFNGFVKSFGESFENTNYEEQQYKTEHTAWHFLQRHVQDALLGCFDEGSFKQVPQRGQLQLLNAQEWHDCIAELHKLLVSSAGTQESLNEIRNEDYQVFLQSFDESLNYEKKFWAHLCEIGLKMGIEAYKKAAPAIYGSSMHQQLLAEATLAFEEEGRGPPAEASIAKMTATCLRHWQDGRQQCEQLSLRSQPCTQPKEMPHDKHNSGVIHVSSCNCGRTQGRREDPFSLRQANYEFYEHMVKMCNLCVKVKQFKFPIFEPTNNEYRAAAFEVAFPLLHAGKNRLAEDAELDPDEEDEELPTGEREEQHITQSNGCSQPLSPTFGSDLNMSIAGFGVSLNESEPCFDQSSSSEAESTCSGTSSEESNTELVLQLKEPAKKHEESCDPDSIAPLPSMCLTSTTEYLPGLVHTLSKVGLLPLFPSWSLACVGPSSIYSHNTGLQEHFQSGFLSGANFLLPWDVQLRLVHATKHYHNSHQPHMSKKQQRYRKHGDRMVLKIFVGFEYECSRGHRFMMCRPDRVLRGGADIERDTCSKMVHTNMPLYYPCPCRSQNNYLAQLMRIHVVTPKAPVNIIVDPKVCMGKDKYTFTLGSMVPPRLSQSAYWILRLPYVYQGDDALIAPPEKLEPDDIMAGGYLLAGMFGIAETDPTLDLNDQGHLDTNELGTFTRI.

Disordered regions lie at residues Ala571–Pro604 and Pro629–Thr653. The span at Asp573 to Pro586 shows a compositional bias: acidic residues. Residues Ile595–Pro604 show a composition bias toward polar residues. The segment covering Ser634–Thr653 has biased composition (low complexity).

Belongs to the SMG8 family.

Its function is as follows. Involved in nonsense-mediated decay (NMD) of mRNAs containing premature stop codons. Probable component of kinase complex containing nonC and recruited to stalled ribosomes. This is Nonsense-mediated mRNA decay factor SMG8 from Drosophila pseudoobscura pseudoobscura (Fruit fly).